The chain runs to 461 residues: Cysteine--tRNA ligase (461 aa).

C28 lines the Zn(2+) pocket. Positions 30–40 match the 'HIGH' region motif; the sequence is ITIYDLCHIGH. The Zn(2+) site is built by C209, H234, and E238. The 'KMSKS' region signature appears at 266-270; that stretch reads KMSKS. Residue K269 coordinates ATP.

The protein belongs to the class-I aminoacyl-tRNA synthetase family. As to quaternary structure, monomer. The cofactor is Zn(2+).

It localises to the cytoplasm. The enzyme catalyses tRNA(Cys) + L-cysteine + ATP = L-cysteinyl-tRNA(Cys) + AMP + diphosphate. The sequence is that of Cysteine--tRNA ligase from Yersinia pestis bv. Antiqua (strain Antiqua).